A 202-amino-acid polypeptide reads, in one-letter code: Josephin-1 (202 aa).

Residues methionine 1–alanine 22 are disordered. The residue at position 15 (serine 15) is a Phosphoserine. Positions proline 23–valine 202 constitute a Josephin domain. Catalysis depends on cysteine 36, which acts as the Nucleophile. Catalysis depends on histidine 139, which acts as the Proton acceptor.

In terms of assembly, interacts with beta-actin/ACTB. In terms of processing, monoubiquitinated. Ubiquitination activates deubiquitination activity in vitro. Widely expressed (at protein level).

Its subcellular location is the cell membrane. The protein localises to the cytoplasm. It catalyses the reaction Thiol-dependent hydrolysis of ester, thioester, amide, peptide and isopeptide bonds formed by the C-terminal Gly of ubiquitin (a 76-residue protein attached to proteins as an intracellular targeting signal).. Deubiquitinates monoubiquitinated probes (in vitro). When ubiquitinated, cleaves 'Lys-63'-linked and 'Lys-48'-linked poly-ubiquitin chains (in vitro), hence may act as a deubiquitinating enzyme. May increase macropinocytosis and suppress clathrin- and caveolae-mediated endocytosis. May enhance membrane dynamics and cell motility independently of its catalytic activity. In Mus musculus (Mouse), this protein is Josephin-1 (Josd1).